We begin with the raw amino-acid sequence, 964 residues long: Iron-responsive element-binding protein 2 (964 aa).

[4Fe-4S] cluster contacts are provided by C513, C579, and C582.

The protein belongs to the aconitase/IPM isomerase family. As to quaternary structure, interacts with RBCK1 only in iron-rich conditions. Interacts (when associated with the 4Fe-4S) with FBXL5. Interacts with CIAO1 and CIAO2A. Requires [4Fe-4S] cluster as cofactor. In terms of processing, ubiquitinated and degraded by the proteasome in presence of high level of iron and oxygen. Ubiquitinated by a SCF complex containing FBXL5. Upon iron and oxygen depletion FBXL5 is degraded, preventing ubiquitination and allowing its RNA-binding activity.

It localises to the cytoplasm. RNA-binding protein that binds to iron-responsive elements (IRES), which are stem-loop structures found in the 5'-UTR of ferritin, and delta aminolevulinic acid synthase mRNAs, and in the 3'-UTR of transferrin receptor mRNA. Binding to the IRE element in ferritin results in the repression of its mRNA translation. Binding of the protein to the transferrin receptor mRNA inhibits the degradation of this otherwise rapidly degraded mRNA. This is Iron-responsive element-binding protein 2 (IREB2) from Sus scrofa (Pig).